The chain runs to 432 residues: MSILKIHAREIFDSRGNPTVEVDLYTKKGLFRAAVPSGASTGIYEALELRDNDKTRYMGKGVKRAVKYINEFLAPALCNQDVTVIEQEKIDKLMLDMDGTENKYKFGANAILGVSLAVCKAGAAEKGVPLYRHIADLAGNPEVILPVPAFNVINGGSHAGNKLAMQEFMILPVGASSFKDAMRIGAEVYHNLKNVIKEKYGKDATNVGDEGGFAPNILENKEALKLLKNAIGKAGYTDKIVIGMDVAASEFYKGGKYDLDFKSPDDPSRYIPSDKLADLYKGFVKDYPVVSIEDPFDQDDWEAWSKFTASTSIQVVGDDLTVTNPKRIAKGVAEKSCNCLLLKVNQIGSVTESLQACKMAQSSGWGVMVSHRSGETEDTLISDLVVGLCTGQIKTGAPCRSERLAKYNQLMRIEEELGAKAKFAGKNFRHPI.

Residue Ser40 participates in Mg(2+) binding. Substrate is bound by residues His158 and Glu167. The active-site Proton donor is Glu210. Positions 245, 293, and 318 each coordinate Mg(2+). Substrate contacts are provided by Glu293 and Asp318. The active-site Proton acceptor is the Lys343. Residues 370 to 373 (SHRS) and Lys394 contribute to the substrate site.

Belongs to the enolase family. Dimer. Requires Mg(2+) as cofactor.

Its subcellular location is the cytoplasm. It carries out the reaction (2R)-2-phosphoglycerate = phosphoenolpyruvate + H2O. It functions in the pathway carbohydrate degradation; glycolysis; pyruvate from D-glyceraldehyde 3-phosphate: step 4/5. Its function is as follows. Multifunctional enzyme that, as well as its role in glycolysis, plays a part in various processes such as growth control, hypoxia tolerance and allergic responses. This chain is Alpha-enolase, found in Thunnus albacares (Yellowfin tuna).